The chain runs to 271 residues: Murein DD-endopeptidase MepH (271 aa).

An N-terminal signal peptide occupies residues 1–27; sequence MARINRISITLCALLFTTLPLTPMAHA. Residues 27–102 form a disordered region; it reads ASKQARESSA…KHAVNKTASA (76 aa). The segment covering 55-64 has biased composition (basic residues); that stretch reads KTQKTAKKAA. Low complexity predominate over residues 65 to 86; sequence SKSTTKSKTASSVKKSSITASK. In terms of domain architecture, NlpC/P60 spans 138 to 265; it reads QKATKVAMNK…RHYVGARRVM (128 aa). Residue Cys-169 is the Nucleophile of the active site. The active-site Proton acceptor is the His-224. Gln-236 is an active-site residue.

It belongs to the peptidase C40 family.

It functions in the pathway cell wall biogenesis; cell wall polysaccharide biosynthesis. In terms of biological role, a murein DD-endopeptidase with specificity for D-Ala-meso-diaminopimelic acid (mDAP) cross-links. Its role is probably to cleave D-Ala-mDAP cross-links to allow insertion of new glycans and thus cell wall expansion. Functionally redundant with MepM and MepH. Partially suppresses an mepS disruption mutant. This is Murein DD-endopeptidase MepH (mepH) from Escherichia coli (strain K12).